We begin with the raw amino-acid sequence, 413 residues long: Arginine biosynthesis bifunctional protein ArgJ 1 (413 aa).

Substrate-binding residues include Thr-154, Lys-180, Thr-191, Glu-277, Asn-408, and Thr-413. Thr-191 acts as the Nucleophile in catalysis.

Belongs to the ArgJ family. Heterotetramer of two alpha and two beta chains.

Its subcellular location is the cytoplasm. It carries out the reaction N(2)-acetyl-L-ornithine + L-glutamate = N-acetyl-L-glutamate + L-ornithine. The catalysed reaction is L-glutamate + acetyl-CoA = N-acetyl-L-glutamate + CoA + H(+). The protein operates within amino-acid biosynthesis; L-arginine biosynthesis; L-ornithine and N-acetyl-L-glutamate from L-glutamate and N(2)-acetyl-L-ornithine (cyclic): step 1/1. It participates in amino-acid biosynthesis; L-arginine biosynthesis; N(2)-acetyl-L-ornithine from L-glutamate: step 1/4. In terms of biological role, catalyzes two activities which are involved in the cyclic version of arginine biosynthesis: the synthesis of N-acetylglutamate from glutamate and acetyl-CoA as the acetyl donor, and of ornithine by transacetylation between N(2)-acetylornithine and glutamate. This Nostoc sp. (strain PCC 7120 / SAG 25.82 / UTEX 2576) protein is Arginine biosynthesis bifunctional protein ArgJ 1.